Here is a 48-residue protein sequence, read N- to C-terminus: Disintegrin accutin (48 aa).

Glutamine 1 carries the post-translational modification Pyrrolidone carboxylic acid. The 48-residue stretch at 1-48 (QGAQCTAGPCCWPCKFLKEGTICRRARGDDLDDYCNGISADCPRNPYY) folds into the Disintegrin domain. 3 cysteine pairs are disulfide-bonded: cysteine 5–cysteine 11, cysteine 10–cysteine 35, and cysteine 23–cysteine 42. The Cell attachment site signature appears at 27–29 (RGD).

The protein belongs to the venom metalloproteinase (M12B) family. P-II subfamily. P-IIa sub-subfamily. Monomer (disintegrin). As to expression, expressed by the venom gland.

The protein resides in the secreted. In terms of biological role, inhibit human platelet aggregation induced by ADP, collagen, thrombin or the thromboxane analog U46619 in platelet suspension with IC(50) values of 66-267 nM. Acts by inhibiting fibrinogen interaction with platelet receptors GPIIb/GPIIIa (ITGA2B/ITGB3). It also inhibits angiogenesis in vivo and in vitro by blocking integrin alpha-V/beta-3 (ITGAV/ITGB3) of endothelial cells and by inducing apoptosis. The polypeptide is Disintegrin accutin (Deinagkistrodon acutus (Hundred-pace snake)).